The following is a 102-amino-acid chain: Large ribosomal subunit protein bL21 (102 aa).

This sequence belongs to the bacterial ribosomal protein bL21 family. As to quaternary structure, part of the 50S ribosomal subunit. Contacts protein L20.

Its function is as follows. This protein binds to 23S rRNA in the presence of protein L20. This Bacillus cytotoxicus (strain DSM 22905 / CIP 110041 / 391-98 / NVH 391-98) protein is Large ribosomal subunit protein bL21.